A 121-amino-acid chain; its full sequence is NADH-quinone oxidoreductase subunit A 2 (121 aa).

The next 3 helical transmembrane spans lie at 6–26, 60–80, and 89–109; these read FLPVLFMVTGIVLVAAATLFV, VPFFILAILLVVFDVEAMFLF, and IGFVGYIEMFVFMLLLLVGFA.

The protein belongs to the complex I subunit 3 family. As to quaternary structure, NDH-1 is composed of 14 different subunits. Subunits NuoA, H, J, K, L, M, N constitute the membrane sector of the complex.

It is found in the cell inner membrane. It catalyses the reaction a quinone + NADH + 5 H(+)(in) = a quinol + NAD(+) + 4 H(+)(out). NDH-1 shuttles electrons from NADH, via FMN and iron-sulfur (Fe-S) centers, to quinones in the respiratory chain. The immediate electron acceptor for the enzyme in this species is believed to be ubiquinone. Couples the redox reaction to proton translocation (for every two electrons transferred, four hydrogen ions are translocated across the cytoplasmic membrane), and thus conserves the redox energy in a proton gradient. This Rhizobium meliloti (strain 1021) (Ensifer meliloti) protein is NADH-quinone oxidoreductase subunit A 2.